A 538-amino-acid chain; its full sequence is Casein kinase I homolog 1 (538 aa).

The tract at residues 39–61 (SPARSSMTATTAANSNSNSSRDD) is disordered. The span at 41-57 (ARSSMTATTAANSNSNS) shows a compositional bias: low complexity. The 285-residue stretch at 69–353 (YKIGKKIGEG…ETADGQYDWM (285 aa)) folds into the Protein kinase domain. ATP is bound by residues 75–83 (IGEGSFGVL) and Lys98. Catalysis depends on Asp188, which acts as the Proton acceptor. 2 disordered regions span residues 366 to 428 (NKKP…KPKL) and 474 to 527 (QQQL…LAAS). Composition is skewed to low complexity over residues 391–410 (QLQMQQLQMQQLQQQQQQQQ) and 474–498 (QQQLRATGQPPSQPQAQTQSQQFGA). Ser522, Ser523, and Ser527 each carry phosphoserine. 2 S-palmitoyl cysteine lipidation sites follow: Cys537 and Cys538.

Belongs to the protein kinase superfamily. CK1 Ser/Thr protein kinase family. Casein kinase I subfamily. In terms of processing, palmitoylated by AKR1.

The protein resides in the cell membrane. It is found in the mitochondrion membrane. It catalyses the reaction L-seryl-[protein] + ATP = O-phospho-L-seryl-[protein] + ADP + H(+). It carries out the reaction L-threonyl-[protein] + ATP = O-phospho-L-threonyl-[protein] + ADP + H(+). In terms of biological role, casein kinases are operationally defined by their preferential utilization of acidic proteins such as caseins as substrates. The sequence is that of Casein kinase I homolog 1 (YCK1) from Saccharomyces cerevisiae (strain ATCC 204508 / S288c) (Baker's yeast).